The sequence spans 513 residues: Exoglucanase 1 (513 aa).

Positions 1-17 are cleaved as a signal peptide; it reads MYRKLAVISAFLATARA. At Gln-18 the chain carries Pyrrolidone carboxylic acid. The tract at residues 18–453 is catalytic; sequence QSACTLQSET…GSTGNPSGGN (436 aa). Disulfide bonds link Cys-21/Cys-89, Cys-36/Cys-42, Cys-67/Cys-88, Cys-78/Cys-84, Cys-155/Cys-414, Cys-189/Cys-227, Cys-193/Cys-226, Cys-247/Cys-273, Cys-255/Cys-260, and Cys-278/Cys-348. N-linked (GlcNAc) asparagine glycosylation occurs at Asn-62. Catalysis depends on Glu-229, which acts as the Nucleophile. Catalysis depends on Glu-234, which acts as the Proton donor/acceptor. N-linked (GlcNAc) asparagine glycans are attached at residues Asn-287 and Asn-401. Over residues 401-437 the composition is skewed to polar residues; the sequence is NETSSTPGAVRGSCSTSSGVPAQVESQSPNAKVTFSN. The interval 401-480 is disordered; it reads NETSSTPGAV…TGSSPGPTQS (80 aa). Residues 449–459 show a composition bias toward gly residues; that stretch reads PSGGNPPGGNR. A linker region spans residues 454 to 477; the sequence is PPGGNRGTTTTRRPATTTGSSPGP. Positions 460 to 478 are enriched in low complexity; sequence GTTTTRRPATTTGSSPGPT. The O-linked (Man) threonine glycan is linked to Thr-461. O-linked (Man...) threonine glycosylation is found at Thr-462, Thr-463, and Thr-464. Thr-469 carries O-linked (Man) threonine glycosylation. Thr-470 and Thr-471 each carry an O-linked (Man...) threonine glycan. O-linked (Man) serine glycans are attached at residues Ser-473 and Ser-474. The CBM1 domain occupies 477–513; it reads PTQSHYGQCGGIGYSGPTVCASGTTCQVLNPYYSQCL. O-linked (Man) threonine glycosylation occurs at Thr-478. Ser-480 and Ser-491 each carry an O-linked (Man) serine glycan. Intrachain disulfides connect Cys-485–Cys-502 and Cys-496–Cys-512.

It belongs to the glycosyl hydrolase 7 (cellulase C) family. N-glycosylated. The catalytic core domain comprises three N-linked glycans which each consist of a single N-acetylglucosamine residue. In terms of processing, O-glycosylated. Within the linker domain, all 8 threonines are variably glycosylated with between at least one, and up to three, mannose residues per site. All serines in this domain are at least partially glycosylated with a single mannose residue. O-glycosylation of the cellulase linker provides protection from proteolysis. Linker glycans also contribute to binding affinity of cellobiohydrolases to cellulose.

It is found in the secreted. The catalysed reaction is Hydrolysis of (1-&gt;4)-beta-D-glucosidic linkages in cellulose and cellotetraose, releasing cellobiose from the non-reducing ends of the chains.. Its function is as follows. Exocellobiohydrolases (CBH) that catalyzes the hydrolysis of 1,4-beta-D-glucosidic bonds in cellulose to release the disaccharide cellobiose. The degradation of cellulose involves an interplay between different cellulolytic enzymes. Hydrolysis starts with endoglucanases (EGs), which cut internal beta-1,4-glucosidic bonds in cellulose to reduce the polymerization degree of the substrate and create new chain ends for exocellobiohydrolases (CBHs). The CBHs release the disaccharide cellobiose from the non-reducing end of the cellulose polymer chain. Finally, beta-1,4-glucosidases hydrolyze the cellobiose and other short cello-oligosaccharides into glucose units. This is Exoglucanase 1 (cbh1) from Hypocrea jecorina (Trichoderma reesei).